The chain runs to 93 residues: UPF0367 protein tsr0804 (93 aa).

This sequence belongs to the UPF0367 family.

This chain is UPF0367 protein tsr0804, found in Thermosynechococcus vestitus (strain NIES-2133 / IAM M-273 / BP-1).